The chain runs to 477 residues: Ribosomal RNA small subunit methyltransferase F (477 aa).

S-adenosyl-L-methionine is bound by residues 125 to 131 (AAAPGSK), Glu149, Asp176, and Asp194. The active-site Nucleophile is Cys247.

Belongs to the class I-like SAM-binding methyltransferase superfamily. RsmB/NOP family.

It localises to the cytoplasm. The enzyme catalyses cytidine(1407) in 16S rRNA + S-adenosyl-L-methionine = 5-methylcytidine(1407) in 16S rRNA + S-adenosyl-L-homocysteine + H(+). Its function is as follows. Specifically methylates the cytosine at position 1407 (m5C1407) of 16S rRNA. The chain is Ribosomal RNA small subunit methyltransferase F from Klebsiella pneumoniae (strain 342).